Consider the following 463-residue polypeptide: Protein DML1 (463 aa).

This sequence belongs to the misato family.

The protein resides in the mitochondrion. Functionally, involved in the partitioning of the mitochondrial organelle and mitochondrial DNA (mtDNA) inheritance. This is Protein DML1 (DML1) from Debaryomyces hansenii (strain ATCC 36239 / CBS 767 / BCRC 21394 / JCM 1990 / NBRC 0083 / IGC 2968) (Yeast).